The chain runs to 480 residues: Probable glycine dehydrogenase (decarboxylating) subunit 2 (480 aa).

Lys-265 carries the N6-(pyridoxal phosphate)lysine modification.

It belongs to the GcvP family. C-terminal subunit subfamily. The glycine cleavage system is composed of four proteins: P, T, L and H. In this organism, the P 'protein' is a heterodimer of two subunits. The cofactor is pyridoxal 5'-phosphate.

The enzyme catalyses N(6)-[(R)-lipoyl]-L-lysyl-[glycine-cleavage complex H protein] + glycine + H(+) = N(6)-[(R)-S(8)-aminomethyldihydrolipoyl]-L-lysyl-[glycine-cleavage complex H protein] + CO2. In terms of biological role, the glycine cleavage system catalyzes the degradation of glycine. The P protein binds the alpha-amino group of glycine through its pyridoxal phosphate cofactor; CO(2) is released and the remaining methylamine moiety is then transferred to the lipoamide cofactor of the H protein. The protein is Probable glycine dehydrogenase (decarboxylating) subunit 2 of Thermosipho africanus (strain TCF52B).